A 402-amino-acid polypeptide reads, in one-letter code: N-acetyltransferase Eis (402 aa).

An N-acetyltransferase domain is found at 3-154 (VTLCSPTEDD…RFARFHADAP (152 aa)). Residues 85 to 87 (VAV), 93 to 98 (RRGLLR), and 121 to 122 (SE) each bind acetyl-CoA. Tyr126 (proton donor) is an active-site residue. Catalysis depends on Phe402, which acts as the Proton acceptor; via carboxylate.

This sequence belongs to the acetyltransferase Eis family. As to quaternary structure, homohexamer; trimer of dimers.

The protein resides in the secreted. It is found in the host cytoplasmic vesicle. The protein localises to the host phagosome. Its subcellular location is the extracellular vesicle. It localises to the bacterial extracellular vesicle. The protein resides in the host extracellular space. The catalysed reaction is L-lysyl-[protein] + acetyl-CoA = N(6)-acetyl-L-lysyl-[protein] + CoA + H(+). Its function is as follows. Effector that is released into the host cell and affects host immune responses. Acts as an acetyltransferase that acetylates lysine residues of host proteins. This chain is N-acetyltransferase Eis, found in Mycobacterium bovis (strain ATCC BAA-935 / AF2122/97).